We begin with the raw amino-acid sequence, 436 residues long: MMGEAAVAAGPCPLREDSFTRFSSQSNVYGLAGGAGGRGELLAATLKGKVLGFRYQDLRQKIRPVAKELQFNYIPVDAEIVSIDTFNKSPPKRGLVVGITFIKDSGDKGSPFLNIYCDYEPGSEYNLDSIAQSCLNLELQFTPFQLCHAEVQVGDQLETVFLLSGNDPAIHLYKENEGLHQFEEQPVENLFPELTNLTSSVLWLDVHNFPGTSRRLSALGCQSGYVRVAHVDQRSREVLQMWSVLQDGPISRVIVFSLSAAKETKDRPLQDEYSVLVASMLEPAVVYRDLLNRGLEDQLLLPGSDQFDSVLCSLVTDVDLDGRPEVLVATYGQELLCYKYRGPESGLPEAQHGFHLLWQRSFSSPLLAMAHVDLTGDGLQELAVVSLKGVHILQHSLIQASELVLTRLRHQVEQRRRRLQGLEDGAGAGPAENAAS.

M1 bears the N-acetylmethionine mark.

Part of the KICSTOR complex composed of KPTN, ITFG2, KICS2 and SZT2. SZT2 probably serves as a link between the other three proteins in the KICSTOR complex and mediates the direct interaction with the GATOR1 complex. May associate with F-actin filaments.

The protein localises to the lysosome membrane. It is found in the cell projection. It localises to the lamellipodium. The protein resides in the stereocilium. As part of the KICSTOR complex functions in the amino acid-sensing branch of the TORC1 signaling pathway. Recruits, in an amino acid-independent manner, the GATOR1 complex to the lysosomal membranes and allows its interaction with GATOR2 and the RAG GTPases. Functions upstream of the RAG GTPases and is required to negatively regulate mTORC1 signaling in absence of amino acids. In absence of the KICSTOR complex mTORC1 is constitutively localized to the lysosome and activated. The KICSTOR complex is also probably involved in the regulation of mTORC1 by glucose. This is KICSTOR complex protein kaptin from Homo sapiens (Human).